A 90-amino-acid chain; its full sequence is Leech factor Xa inhibitor (90 aa).

The protein resides in the secreted. Potent anticoagulant inhibiting the amidolytic activity of factor Xa (F10) (Ki=4nM) and reducing its ability to activate prothrombin (F2) in the prothrombinase complex (EC(50)=40nM). The protein is Leech factor Xa inhibitor of Haementeria depressa (Leech).